The chain runs to 239 residues: tRNA (guanine-N(7)-)-methyltransferase (239 aa).

Residues Gly64, 87-88, 120-121, and Leu140 contribute to the S-adenosyl-L-methionine site; these read EI and NA. Residue Asp143 is part of the active site. 218–220 lines the S-adenosyl-L-methionine pocket; it reads SEE.

The protein belongs to the class I-like SAM-binding methyltransferase superfamily. TrmB family.

Its subcellular location is the nucleus. It carries out the reaction guanosine(46) in tRNA + S-adenosyl-L-methionine = N(7)-methylguanosine(46) in tRNA + S-adenosyl-L-homocysteine. It participates in tRNA modification; N(7)-methylguanine-tRNA biosynthesis. In terms of biological role, catalyzes the formation of N(7)-methylguanine at position 46 (m7G46) in tRNA. In Culex quinquefasciatus (Southern house mosquito), this protein is tRNA (guanine-N(7)-)-methyltransferase.